We begin with the raw amino-acid sequence, 112 residues long: Nitrogenase-stabilizing/protective protein NifW (112 aa).

This sequence belongs to the NifW family. Homotrimer; associates with NifD.

May protect the nitrogenase Fe-Mo protein from oxidative damage. In Paraburkholderia xenovorans (strain LB400), this protein is Nitrogenase-stabilizing/protective protein NifW.